The primary structure comprises 843 residues: MAKPLTDSEKRKQISVRGLAGLGDVAEVRKSFNRHLHFTLVKDRNVATPRDYFFALAHTVRDHLVGRWIRTQQHYYERDPKRIYYLSLEFYMGRTLQNTMVNLGLQNACDEAIYQLGLDLEELEEIEEDAGLGNGGLGRLAACFLDSMATLGLAAYGYGIRYEFGIFNQKIVNGWQVEEADDWLRYGNPWEKARPEYMLPVHFYGRVEHTPDGVKWLDTQVVLAMPYDTPVPGYKNNTVNTMRLWSAKAPNDFKLQDFNVGDYIEAVLDRNLAENISRVLYPNDNFFEGKELRLKQEYFVVAATLQDIIRRFKSSKFGCRDPVRTCFETFPDKVAIQLNDTHPALSIPELMRILVDVEKVDWDKAWEITKKTCAYTNHTVLPEALERWPVSMFEKLLPRHLEIIYAINQRHLDHVAALFPGDVDRLRRMSVIEEGDCKRINMAHLCVIGSHAVNGVARIHSEIVKQSVFKDFYELEPEKFQNKTNGITPRRWLLLCNPGLADTIVEKIGEEFLTDLSQLKKLLPLVSDEVFIRDVAKVKQENKLKFSAFLEKEYKVKINPSSMFDVHVKRIHEYKRQLLNCLHVVTLYNRIKRDPAKAFVPRTVMIGGKAAPGYHMAKLIIKLVTSIGDVVNHDPVVGDRLKVIFLENYRVSLAEKVIPAADLSQQISTAGTEASGTGNMKFMLNGALTIGTMDGANVEMAEEAGAENLFIFGLRVEDVEALDRKGYNAREYYDHLPELKQAVDQISSGFFSPKEPDCFKDIVNMLMHHDRFKVFADYEAYMQCQAQVDQLYRNPKEWTKKVIRNIACSGKFSSDRTITEYAREIWGVEPSDLQIPPPNIPRD.

Position 2 is an N-acetylalanine (Ala2). Ser15 is modified (phosphoserine; by PHK; in form phosphorylase A). AMP is bound by residues Asp43, Tyr197, and Arg310. Tyr197 bears the Phosphotyrosine mark. At Tyr473 the chain carries Phosphotyrosine. Residue Lys569 participates in pyridoxal 5'-phosphate binding. A pyridoxal 5'-phosphate region spans residues 677-678; that stretch reads TG. Residue Lys681 is modified to N6-(pyridoxal phosphate)lysine.

This sequence belongs to the glycogen phosphorylase family. In terms of assembly, homodimer. Dimers associate into a tetramer to form the enzymatically active phosphorylase A. Pyridoxal 5'-phosphate is required as a cofactor. Phosphorylated. Phosphorylation of Ser-15 converts phosphorylase B (unphosphorylated) to phosphorylase A.

It catalyses the reaction [(1-&gt;4)-alpha-D-glucosyl](n) + phosphate = [(1-&gt;4)-alpha-D-glucosyl](n-1) + alpha-D-glucose 1-phosphate. Its activity is regulated as follows. Activity of phosphorylase is controlled both by allosteric means (through the non-covalent binding of metabolites) and by covalent modification. Thus AMP allosterically activates, whereas ATP, ADP, and glucose-6-phosphate allosterically inhibit, phosphorylase B. Activated upon phosphorylation. In terms of biological role, glycogen phosphorylase that regulates glycogen mobilization. Phosphorylase is an important allosteric enzyme in carbohydrate metabolism. Enzymes from different sources differ in their regulatory mechanisms and in their natural substrates. However, all known phosphorylases share catalytic and structural properties. This chain is Glycogen phosphorylase, brain form, found in Homo sapiens (Human).